We begin with the raw amino-acid sequence, 331 residues long: Peroxisomal nicotinamide adenine dinucleotide carrier (331 aa).

3 Solcar repeats span residues 2–91 (SDAL…FRNR), 109–216 (VGMF…MLTK), and 229–320 (VTAL…LVKG). The next 6 helical transmembrane spans lie at 5–25 (LING…TYPL), 63–85 (LYGG…YYFY), 116–136 (LVAA…WVIV), 180–200 (VYDE…LIMV), 235–255 (FLLG…LLVV), and 293–313 (YKGM…LFMI).

It belongs to the mitochondrial carrier (TC 2.A.29) family. Homodimer. In terms of tissue distribution, expressed in cotyledons, hypocotyls, vascular tissues, trichomes, hydathodes, seeds, pedicels, flowers and stigma.

The protein localises to the glyoxysome membrane. Its activity is regulated as follows. Inhibited by pyridoxal 5'-phosphate, bathophenanthroline, tannic acid, mersalyl, mercuric chloride and bromocresol purple. Its function is as follows. Mediates the NAD(+) import into peroxisomes. Favors the NAD(+)(in)/AMP(out) antiport exchange, but is also able to catalyze a low unidirectional transport that might be essential under special conditions. Transports CoA, dephospho-CoA, acetyl-CoA, adenosine 3',5'-diphosphate (PAP), NAD(+), AMP, ADP and NADH, but has no activity with ATP, GTP, GDP, NADPH, NADP(+) or FAD. Required for peroxisomes proliferation. This is Peroxisomal nicotinamide adenine dinucleotide carrier (PXN) from Arabidopsis thaliana (Mouse-ear cress).